Here is a 131-residue protein sequence, read N- to C-terminus: Acyl carrier protein 3, mitochondrial (131 aa).

The transit peptide at 1 to 39 (MHCIRSSILQHLRLRVSVRPTSLLQNENGFKSIGIFNFT) directs the protein to the mitochondrion. Residues 49-124 (DQILSRVIEL…DVATYILSET (76 aa)) form the Carrier domain. Position 84 is an O-(pantetheine 4'-phosphoryl)serine (Ser-84).

Belongs to the acyl carrier protein (ACP) family. As to quaternary structure, complex I is composed of at least 49 different subunits. 4'-phosphopantetheine is transferred from CoA to a specific serine of the apo-ACP-like protein.

Its subcellular location is the mitochondrion. It participates in lipid metabolism; fatty acid biosynthesis. Its function is as follows. Carrier of the growing fatty acid chain in fatty acid biosynthesis. May be involved in the synthesis of short and medium chain fatty acids. Accessory and non-catalytic subunit of the mitochondrial membrane respiratory chain NADH dehydrogenase (Complex I), which functions in the transfer of electrons from NADH to the respiratory chain. In Arabidopsis thaliana (Mouse-ear cress), this protein is Acyl carrier protein 3, mitochondrial (MTACP2).